The following is a 1400-amino-acid chain: Macrophage-stimulating protein receptor (1400 aa).

The first 24 residues, 1–24, serve as a signal peptide directing secretion; it reads MELLPPLPQSFLLLLLLPAKPAAG. Residues 25–957 lie on the Extracellular side of the membrane; the sequence is EDWQCPRTPY…PGPDGVPQST (933 aa). Positions 31 to 522 constitute a Sema domain; the sequence is RTPYAASRDF…SGDQVFQVPI (492 aa). An N-linked (GlcNAc...) asparagine glycan is attached at Asn66. Disulfide bonds link Cys101-Cys104, Cys107-Cys162, Cys135-Cys143, Cys174-Cys177, Cys300-Cys367, Cys385-Cys407, and Cys386-Cys422. N-linked (GlcNAc...) asparagine glycans are attached at residues Asn419, Asn458, and Asn488. 4 disulfide bridges follow: Cys527/Cys545, Cys533/Cys567, Cys536/Cys552, and Cys548/Cys558. 3 consecutive IPT/TIG domains span residues 569 to 671, 684 to 767, and 770 to 860; these read PKLT…FRVD, PVLI…FQYR, and PVVL…FRFL. Asn654, Asn720, Asn841, and Asn897 each carry an N-linked (GlcNAc...) asparagine glycan. The chain crosses the membrane as a helical span at residues 958–978; the sequence is LLGILLPLLLLVAALATALVF. Over 979–1400 the chain is Cytoplasmic; sequence SYWWRRKQLV…RPLSEPPRPT (422 aa). The Protein kinase domain maps to 1082–1345; the sequence is THSDRVIGKG…VLVGEVEQIV (264 aa). Residues 1088–1096, Lys1114, and 1161–1164 contribute to the ATP site; these read IGKGHFGVV and LPYM. The active-site Proton acceptor is the Asp1208. Arg1212 is a binding site for ATP. 4 positions are modified to phosphotyrosine; by autocatalysis: Tyr1238, Tyr1239, Tyr1353, and Tyr1360. Residues 1367–1400 form a disordered region; sequence TSHEMNVRPEQPQFSPMPGNVRRPRPLSEPPRPT.

Belongs to the protein kinase superfamily. Tyr protein kinase family. Heterodimer of an alpha chain and a beta chain which are disulfide linked. Binds PLXNB1. Associates with and is negatively regulated by HYAL2. Interacts when phosphorylated with downstream effectors including PIK3R1, PCLG1, GRB2 and GAB1. Interacts with integrin beta1/ITGB1 in a ligand-independent fashion. Post-translationally, proteolytic processing yields the two subunits. In terms of processing, autophosphorylated in response to ligand binding on Tyr-1238 and Tyr-1239 in the kinase domain leading to further phosphorylation of Tyr-1353 and Tyr-1360 in the C-terminal multifunctional docking site. Ubiquitinated. Ubiquitination by CBL regulates the receptor stability and activity through proteasomal degradation. Post-translationally, O-mannosylation of IPT/TIG domains on Thr or Ser residues by TMEM260 is required for protein maturation. O-mannosylated residues are composed of single mannose glycans that are not elongated or modified. In terms of tissue distribution, expressed in colon, skin, lung and bone marrow.

The protein resides in the membrane. The enzyme catalyses L-tyrosyl-[protein] + ATP = O-phospho-L-tyrosyl-[protein] + ADP + H(+). With respect to regulation, in its inactive state, the C-terminal tail interacts with the catalytic domain and inhibits the kinase activity. Upon ligand binding, the C-terminal tail is displaced and becomes phosphorylated, thus increasing the kinase activity. Its function is as follows. Receptor tyrosine kinase that transduces signals from the extracellular matrix into the cytoplasm by binding to MST1 ligand. Regulates many physiological processes including cell survival, migration and differentiation. Ligand binding at the cell surface induces autophosphorylation of RON on its intracellular domain that provides docking sites for downstream signaling molecules. Following activation by ligand, interacts with the PI3-kinase subunit PIK3R1, PLCG1 or the adapter GAB1. Recruitment of these downstream effectors by RON leads to the activation of several signaling cascades including the RAS-ERK, PI3 kinase-AKT, or PLCgamma-PKC. RON signaling activates the wound healing response by promoting epithelial cell migration, proliferation as well as survival at the wound site. Also plays a role in the innate immune response by regulating the migration and phagocytic activity of macrophages. Alternatively, RON can also promote signals such as cell migration and proliferation in response to growth factors other than MST1 ligand. The polypeptide is Macrophage-stimulating protein receptor (MST1R) (Homo sapiens (Human)).